Here is a 459-residue protein sequence, read N- to C-terminus: Vasoactive intestinal polypeptide receptor 1 (459 aa).

The first 30 residues, M1–A30, serve as a signal peptide directing secretion. Residues A31 to T142 lie on the Extracellular side of the membrane. 5 disulfides stabilise this stretch: C37/C209, C50/C72, C63/C105, C86/C122, and C216/C286. 3 N-linked (GlcNAc...) asparagine glycosylation sites follow: N58, N69, and N100. Residues V143–L167 form a helical membrane-spanning segment. Residues F168–R175 lie on the Cytoplasmic side of the membrane. The chain crosses the membrane as a helical span at residues N176–D197. The Extracellular portion of the chain corresponds to M198–K217. A helical transmembrane segment spans residues A218 to Y242. Over T243–Y255 the chain is Cytoplasmic. A helical membrane pass occupies residues F256–V277. At R278–S293 the chain is on the extracellular side. N292 carries an N-linked (GlcNAc...) asparagine glycan. The helical transmembrane segment at S294–I318 threads the bilayer. The Cytoplasmic portion of the chain corresponds to R319–R340. A helical transmembrane segment spans residues L341–F361. Residues F362–Q369 lie on the Extracellular side of the membrane. Residues V370–L393 traverse the membrane as a helical segment. At N394–V459 the chain is on the cytoplasmic side.

It belongs to the G-protein coupled receptor 2 family. In terms of assembly, interacts with ADCYAP1/PACAP; activated by both PACAP27 and PACAP38 neuropeptides. Interacts with VIP; the interaction results in VIPR1 activation. As to expression, in liver, lung, intestines, thymus and brain (mostly in the cerebral cortex and hippocampus).

It localises to the cell membrane. Functionally, g protein-coupled receptor activated by the neuropeptides vasoactive intestinal peptide (VIP) and pituitary adenylate cyclase-activating polypeptide (ADCYAP1/PACAP). Binds VIP and both PACAP27 and PACAP38 bioactive peptides with the following order of ligand affinity VIP = PACAP27 &gt; PACAP38. Ligand binding causes a conformation change that triggers signaling via guanine nucleotide-binding proteins (G proteins) and modulates the activity of downstream effectors. Activates cAMP-dependent pathway. The polypeptide is Vasoactive intestinal polypeptide receptor 1 (Rattus norvegicus (Rat)).